We begin with the raw amino-acid sequence, 452 residues long: NADH-ubiquinone oxidoreductase chain 4 (452 aa).

A run of 14 helical transmembrane segments spans residues 4-24 (LVLG…SMVW), 29-49 (VGSV…MTIS), 59-79 (FVSL…LLAS), 88-110 (LIYQ…LAFM), 114-136 (LLLF…TRWG), 144-164 (AGTY…ICLI), 182-202 (VFQL…AFLV), 221-241 (PIAG…YGMM), 252-272 (MLSS…MGGI), 282-304 (LIAY…GVAW), 309-331 (AMVL…NLWY), 345-365 (LIMI…MNMA), 390-410 (IVYM…LFGM), and 432-452 (LLTT…GLMF).

The protein belongs to the complex I subunit 4 family.

Its subcellular location is the mitochondrion membrane. The catalysed reaction is a ubiquinone + NADH + 5 H(+)(in) = a ubiquinol + NAD(+) + 4 H(+)(out). Functionally, core subunit of the mitochondrial membrane respiratory chain NADH dehydrogenase (Complex I) that is believed to belong to the minimal assembly required for catalysis. Complex I functions in the transfer of electrons from NADH to the respiratory chain. The immediate electron acceptor for the enzyme is believed to be ubiquinone. This is NADH-ubiquinone oxidoreductase chain 4 (ND4) from Branchiostoma lanceolatum (Common lancelet).